The chain runs to 107 residues: Large ribosomal subunit protein P1 (107 aa).

Residues 68–82 (PATAGAPAAAGAAAP) show a composition bias toward low complexity. The disordered stretch occupies residues 68–107 (PATAGAPAAAGAAAPAEEKKEEKEEEKEESDEDMGFGLFD). Acidic residues predominate over residues 90–101 (KEEEKEESDEDM).

The protein belongs to the eukaryotic ribosomal protein P1/P2 family. As to quaternary structure, P1 and P2 exist as dimers at the large ribosomal subunit.

It is found in the cytoplasm. Its function is as follows. Plays an important role in the elongation step of protein synthesis. This chain is Large ribosomal subunit protein P1, found in Penicillium brevicompactum.